A 302-amino-acid polypeptide reads, in one-letter code: Recombination-associated protein RdgC (302 aa).

The protein belongs to the RdgC family.

The protein resides in the cytoplasm. It is found in the nucleoid. May be involved in recombination. This Proteus mirabilis (strain HI4320) protein is Recombination-associated protein RdgC.